The following is a 406-amino-acid chain: Glutamyl-tRNA reductase (406 aa).

Residues 50–53, serine 107, 112–114, and glutamine 118 contribute to the substrate site; these read TCNR and EPQ. The active-site Nucleophile is the cysteine 51. Position 187-192 (187-192) interacts with NADP(+); it reads GAGEMG.

The protein belongs to the glutamyl-tRNA reductase family. Homodimer.

The enzyme catalyses (S)-4-amino-5-oxopentanoate + tRNA(Glu) + NADP(+) = L-glutamyl-tRNA(Glu) + NADPH + H(+). It participates in porphyrin-containing compound metabolism; protoporphyrin-IX biosynthesis; 5-aminolevulinate from L-glutamyl-tRNA(Glu): step 1/2. Its function is as follows. Catalyzes the NADPH-dependent reduction of glutamyl-tRNA(Glu) to glutamate 1-semialdehyde (GSA). This Aquifex aeolicus (strain VF5) protein is Glutamyl-tRNA reductase.